We begin with the raw amino-acid sequence, 474 residues long: Membrane-bound acylglycerophosphatidylinositol O-acyltransferase mboat7 (474 aa).

Residues 1–5 (MSPNE) lie on the Cytoplasmic side of the membrane. A helical membrane pass occupies residues 6 to 22 (LTYLAILLGSAPLGFLF). Over 23-33 (KNGSPQVKQRG) the chain is Lumenal. A helical membrane pass occupies residues 34-57 (SAAVGVALTLITCHIHSLHSAITI). The Cytoplasmic portion of the chain corresponds to 58–73 (LGTWLIIKILPRSCHF). A helical membrane pass occupies residues 74-93 (PTLGWTFTYLLFFRTITYFD). At 94–193 (IPAPTPFTNA…IPSWKPLVSR (100 aa)) the chain is on the lumenal side. Residues 194-211 (LKPAPVFGVLFLIASQYF) form a helical membrane-spanning segment. At 212–230 (PLDYVKTDEFYEQAFLYRL) the chain is on the cytoplasmic side. Residues 231–260 (FYMVPTFFIFRMRFYVAWIFAECGCISAAF) form a helical membrane-spanning segment. The Lumenal portion of the chain corresponds to 261–427 (GAYPVSAKSR…LTFTDTYRYW (167 aa)). N-linked (GlcNAc...) asparagine glycosylation occurs at Asn322. The helical transmembrane segment at 428 to 448 (QSIYFSVHVLAISLFLLGRVL) threads the bilayer. Topologically, residues 449-473 (ALKSPRRPRNTKEEKAEAKQENRLQ) are cytoplasmic.

It belongs to the membrane-bound acyltransferase family.

Its subcellular location is the endoplasmic reticulum membrane. It catalyses the reaction a 1-acyl-sn-glycero-3-phospho-(1D-myo-inositol) + (5Z,8Z,11Z,14Z)-eicosatetraenoyl-CoA = a 1-acyl-2-(5Z,8Z,11Z,14Z-eicosatetraenoyl)-sn-glycero-3-phospho-(1D-myo-inositol) + CoA. The catalysed reaction is (5Z,8Z,11Z,14Z)-eicosatetraenoyl-CoA + 1-hexadecanoyl-sn-glycero-3-phosphocholine = 1-hexadecanoyl-2-(5Z,8Z,11Z,14Z-eicosatetraenoyl)-sn-glycero-3-phosphocholine + CoA. The enzyme catalyses a 1-acyl-sn-glycero-3-phospho-(1D-myo-inositol) + an acyl-CoA = a 1,2-diacyl-sn-glycero-3-phospho-(1D-myo-inositol) + CoA. It carries out the reaction 1-octadecanoyl-sn-glycero-3-phospho-(1D-myo-inositol) + (5Z,8Z,11Z,14Z)-eicosatetraenoyl-CoA = 1-octadecanoyl-2-(5Z,8Z,11Z,14Z-eicosatetraenoyl)-sn-glycero-3-phospho-(1D-myo-inositol) + CoA. It functions in the pathway lipid metabolism; phospholipid metabolism. Functionally, acyltransferase which catalyzes the transfer of an acyl group from an acyl-CoA to a lysophosphatidylinositol (1-acylglycerophosphatidylinositol or LPI) leading to the production of a phosphatidylinositol (1,2-diacyl-sn-glycero-3-phosphoinositol or PI) and participates in the reacylation step of the phospholipid remodeling pathway also known as the Lands cycle. Prefers arachidonoyl-CoA as the acyl donor, thus contributing to the regulation of free levels arachidonic acid in cell. This is Membrane-bound acylglycerophosphatidylinositol O-acyltransferase mboat7 (mboat7) from Xenopus laevis (African clawed frog).